The following is a 98-amino-acid chain: Co-chaperonin GroES (98 aa).

It belongs to the GroES chaperonin family. In terms of assembly, heptamer of 7 subunits arranged in a ring. Interacts with the chaperonin GroEL.

It localises to the cytoplasm. In terms of biological role, together with the chaperonin GroEL, plays an essential role in assisting protein folding. The GroEL-GroES system forms a nano-cage that allows encapsulation of the non-native substrate proteins and provides a physical environment optimized to promote and accelerate protein folding. GroES binds to the apical surface of the GroEL ring, thereby capping the opening of the GroEL channel. The protein is Co-chaperonin GroES of Paenarthrobacter aurescens (strain TC1).